Reading from the N-terminus, the 1461-residue chain is Formin-3 (1461 aa).

2 disordered regions span residues 1–67 (MASK…SDDN) and 431–457 (YREE…RPTT). Positions 12 to 28 (TSRSIQSRNSSYSTSSN) are enriched in low complexity. 2 stretches are compositionally biased toward polar residues: residues 29-53 (ERIG…STND) and 438-457 (PHGN…RPTT). The 417-residue stretch at 92 to 508 (SETEQLRKIY…KIQKSMQLLT (417 aa)) folds into the GBD/FH3 domain. Positions 137–515 (QHTVLDEATY…LLTHTLEALE (379 aa)) are interaction with tea4. Residues 540 to 639 (GTAEEIAEYK…VQNSNEQHLQ (100 aa)) adopt a coiled-coil conformation. The disordered stretch occupies residues 683–811 (GIPVRVHTPS…EPKIDETSLT (129 aa)). The span at 700–718 (SFSGSEISSSPSPLLPDVS) shows a compositional bias: low complexity. Positions 731–784 (SPPPPPPAVIVPTPAPAPIPVPPPAPIMGGPPPPPPPPGVAGAGPPPPPPPPPA) are enriched in pro residues. Basic and acidic residues predominate over residues 801 to 811 (PEPKIDETSLT). The region spanning 845–1257 (LRDLHKPTRP…RIMSEDRDKL (413 aa)) is the FH2 domain. 2 disordered regions span residues 1268–1337 (AKYR…AEEK) and 1416–1461 (ERLQ…RQKQ). Basic and acidic residues-rich tracts occupy residues 1273-1315 (KREL…KTGD) and 1325-1337 (MEDL…AEEK). The span at 1445 to 1454 (TNGSNASNLV) shows a compositional bias: polar residues.

Belongs to the formin homology family. As to quaternary structure, interacts with rax2, rho3 and tea4. Interacts with tea1 in the presence of tea4.

It localises to the cytoplasm. The protein resides in the cell cortex. The protein localises to the cell tip. Functionally, involved in controlling polarized cell growth. Required for interphase actin cable formation and microtubule organization. The chain is Formin-3 (for3) from Schizosaccharomyces pombe (strain 972 / ATCC 24843) (Fission yeast).